Reading from the N-terminus, the 1391-residue chain is DNA-directed RNA polymerase subunit beta' (1391 aa).

Residues C72, C74, C87, and C90 each coordinate Zn(2+). D462, D464, and D466 together coordinate Mg(2+). 4 residues coordinate Zn(2+): C816, C890, C897, and C900.

The protein belongs to the RNA polymerase beta' chain family. The RNAP catalytic core consists of 2 alpha, 1 beta, 1 beta' and 1 omega subunit. When a sigma factor is associated with the core the holoenzyme is formed, which can initiate transcription. Mg(2+) is required as a cofactor. The cofactor is Zn(2+).

It carries out the reaction RNA(n) + a ribonucleoside 5'-triphosphate = RNA(n+1) + diphosphate. Functionally, DNA-dependent RNA polymerase catalyzes the transcription of DNA into RNA using the four ribonucleoside triphosphates as substrates. The polypeptide is DNA-directed RNA polymerase subunit beta' (Neisseria gonorrhoeae (strain ATCC 700825 / FA 1090)).